The following is an 88-amino-acid chain: MTILSAITSISRPNKISKSVVSSNGGASLSLSSNSVACITACGGSSYSYSSSYQSSGSGFSYNSSYSSSVGYSSSVGIATGSCHSLCH.

The protein belongs to the hssA/B family.

The protein is HssA/B-like protein 61 (hssl61) of Dictyostelium discoideum (Social amoeba).